Here is a 277-residue protein sequence, read N- to C-terminus: Putative phosphoenolpyruvate synthase regulatory protein (277 aa).

Residue 157 to 164 (GVSRCGKT) coordinates ADP.

This sequence belongs to the pyruvate, phosphate/water dikinase regulatory protein family. PSRP subfamily.

It catalyses the reaction [pyruvate, water dikinase] + ADP = [pyruvate, water dikinase]-phosphate + AMP + H(+). The catalysed reaction is [pyruvate, water dikinase]-phosphate + phosphate + H(+) = [pyruvate, water dikinase] + diphosphate. Bifunctional serine/threonine kinase and phosphorylase involved in the regulation of the phosphoenolpyruvate synthase (PEPS) by catalyzing its phosphorylation/dephosphorylation. This is Putative phosphoenolpyruvate synthase regulatory protein from Klebsiella pneumoniae subsp. pneumoniae (strain ATCC 700721 / MGH 78578).